A 430-amino-acid chain; its full sequence is Probable aspartic-type endopeptidase ARB_07403 (430 aa).

Positions 1 to 17 (MHVSTLLVAVLLPLALS) are cleaved as a signal peptide. Positions 18 to 87 (KPTPRKKTGS…SKATAGSGKE (70 aa)) are cleaved as a propeptide — activation peptide. Residues 66 to 105 (YHPQHISKLPGNSKATAGSGKEGVESQDEKGEVVNNPTNH) are disordered. Basic and acidic residues predominate over residues 87 to 97 (EGVESQDEKGE). The Peptidase A1 domain occupies 109–427 (FLSPVTIGGQ…DQRGPSISLA (319 aa)). Residue Asp-125 is part of the active site. The N-linked (GlcNAc...) asparagine glycan is linked to Asn-306. The active site involves Asp-314.

It belongs to the peptidase A1 family.

It localises to the secreted. Its function is as follows. Probable secreted aspartic-type endopeptidase which contributes to virulence. The chain is Probable aspartic-type endopeptidase ARB_07403 from Arthroderma benhamiae (strain ATCC MYA-4681 / CBS 112371) (Trichophyton mentagrophytes).